Reading from the N-terminus, the 518-residue chain is Probable protein phosphatase 2C 14 (518 aa).

Low complexity-rich tracts occupy residues 1-10 (MVEAAAGRRS) and 86-105 (PQRQ…APGA). Disordered stretches follow at residues 1-31 (MVEA…QQHQ) and 86-108 (PQRQ…ADGR). Residues 129 to 437 (VASLYTLQGK…DDCAVVCLFL (309 aa)) form the PPM-type phosphatase domain. Positions 165 and 166 each coordinate Mn(2+). A disordered region spans residues 192 to 222 (TDEGRQTSTSSIKSNGDETGSPGNMGRDAEQ). Positions 197-213 (QTSTSSIKSNGDETGSP) are enriched in polar residues. The Mn(2+) site is built by Asp382 and Asp428.

The protein belongs to the PP2C family. It depends on Mg(2+) as a cofactor. Mn(2+) serves as cofactor.

It catalyses the reaction O-phospho-L-seryl-[protein] + H2O = L-seryl-[protein] + phosphate. The enzyme catalyses O-phospho-L-threonyl-[protein] + H2O = L-threonyl-[protein] + phosphate. This chain is Probable protein phosphatase 2C 14, found in Oryza sativa subsp. japonica (Rice).